The chain runs to 357 residues: MASGGHERANEDYRVSGITGCSKTPQPETQDSLQTSSQSSALCTAPVAAANLGPSLRRNVVSERERRRRISLSCEHLRALLPQFDGRREDMASVLEMSVYFLQLAHSMDPSWEQLSVPQPPQEMWHMWQGDVLQVTLANQIADSKPDSGIAKPSAVSRVQDPPCFGMLDTDQSQATERESELLERPSSCPGHRQSALSFSEPESSSLGPGLPPWIPHSWQPATPEASDIVPGGSHQVASLAGDPESSGMLAEEANLVLASVPDARYTTGAGSDVVDGAPFLMTTNPDWWLGSVEGRGGPALARSSPVDGAEPSFIGDPELCSQELQAGPGELWGLDFGSPGLALKDEADSIFPDFFP.

A compositionally biased stretch (basic and acidic residues) spans 1–14 (MASGGHERANEDYR). A disordered region spans residues 1 to 40 (MASGGHERANEDYRVSGITGCSKTPQPETQDSLQTSSQSS). Polar residues predominate over residues 19 to 31 (TGCSKTPQPETQD). One can recognise a bHLH domain in the interval 54 to 105 (PSLRRNVVSERERRRRISLSCEHLRALLPQFDGRREDMASVLEMSVYFLQLA). A disordered region spans residues 145–210 (KPDSGIAKPS…EPESSSLGPG (66 aa)). Residues 200 to 209 (SEPESSSLGP) show a composition bias toward low complexity.

In terms of assembly, forms both hetero- and homodimers with SOHLH2. In males, it is mainly expressed in testis, while in females it is mainly expressed in ovary. In testis, it is exclusively expressed in spermatogonia, with a preference for prespermatogonia and type A spermatogonia. In ovary, it is detected in germ cell cysts, primordial follicles, and primary follicles but is undetectable by the secondary follicle stage (at protein level). Expressed in the majority of spermatogonia in adult animals, but not in the most undifferentiated spermatogonial population.

Its subcellular location is the cytoplasm. The protein resides in the nucleus. In terms of biological role, transcription regulator of both male and female germline differentiation. Suppresses genes involved in spermatogonial stem cells maintenance, and induces genes important for spermatogonial differentiation. Coordinates oocyte differentiation without affecting meiosis I. This chain is Spermatogenesis- and oogenesis-specific basic helix-loop-helix-containing protein 1 (Sohlh1), found in Mus musculus (Mouse).